The chain runs to 307 residues: Coproporphyrin III ferrochelatase (307 aa).

Residues Tyr12, Arg29, 45–46 (RY), Ser53, and Tyr124 each bind Fe-coproporphyrin III. The Fe(2+) site is built by His181 and Glu263.

The protein belongs to the ferrochelatase family.

It localises to the cytoplasm. It catalyses the reaction Fe-coproporphyrin III + 2 H(+) = coproporphyrin III + Fe(2+). It functions in the pathway porphyrin-containing compound metabolism; protoheme biosynthesis. In terms of biological role, involved in coproporphyrin-dependent heme b biosynthesis. Catalyzes the insertion of ferrous iron into coproporphyrin III to form Fe-coproporphyrin III. In Staphylococcus epidermidis (strain ATCC 35984 / DSM 28319 / BCRC 17069 / CCUG 31568 / BM 3577 / RP62A), this protein is Coproporphyrin III ferrochelatase.